Consider the following 350-residue polypeptide: Protein RecA (350 aa).

Residue 67-74 (GPESSGKT) coordinates ATP.

Belongs to the RecA family.

It localises to the cytoplasm. Can catalyze the hydrolysis of ATP in the presence of single-stranded DNA, the ATP-dependent uptake of single-stranded DNA by duplex DNA, and the ATP-dependent hybridization of homologous single-stranded DNAs. It interacts with LexA causing its activation and leading to its autocatalytic cleavage. This chain is Protein RecA, found in Chlamydia felis (strain Fe/C-56) (Chlamydophila felis).